The chain runs to 122 residues: MIQMQTNLEVADNSGARRVQCIKVLGGAGRRFASVGDIIVVSVKEAIPRGRVKKGDVHRAVIVRTAKEIRREDGSCIRFDRNAAVLINKQGEPIGTRIFGPVTRELRAKKYMKIISLAPEVL.

It belongs to the universal ribosomal protein uL14 family. Part of the 50S ribosomal subunit. Forms a cluster with proteins L3 and L19. In the 70S ribosome, L14 and L19 interact and together make contacts with the 16S rRNA in bridges B5 and B8.

Functionally, binds to 23S rRNA. Forms part of two intersubunit bridges in the 70S ribosome. This chain is Large ribosomal subunit protein uL14, found in Rhodospirillum centenum (strain ATCC 51521 / SW).